The chain runs to 837 residues: Protein translocase subunit SecA 1 (837 aa).

ATP contacts are provided by residues Q85, 103 to 107, and D493; that span reads GEGKT. Residues C821, C823, C832, and H833 each contribute to the Zn(2+) site.

This sequence belongs to the SecA family. Monomer and homodimer. Part of the essential Sec protein translocation apparatus which comprises SecA, SecYEG and auxiliary proteins SecDF. Other proteins may also be involved. Zn(2+) serves as cofactor.

It localises to the cell membrane. Its subcellular location is the cytoplasm. The enzyme catalyses ATP + H2O + cellular proteinSide 1 = ADP + phosphate + cellular proteinSide 2.. Functionally, part of the Sec protein translocase complex. Interacts with the SecYEG preprotein conducting channel. Has a central role in coupling the hydrolysis of ATP to the transfer of proteins into and across the cell membrane, serving as an ATP-driven molecular motor driving the stepwise translocation of polypeptide chains across the membrane. The protein is Protein translocase subunit SecA 1 of Streptococcus pneumoniae serotype 4 (strain ATCC BAA-334 / TIGR4).